The following is a 1671-amino-acid chain: Kinesin-like protein unc-104 (1671 aa).

The Kinesin motor domain maps to Ser3 to Ile351. Residue Gly97–Ser104 participates in ATP binding. Residues Asn358–Glu437 are a coiled coil. Residues Asp391–Thr413 are disordered. Over residues Lys395 to Thr413 the composition is skewed to polar residues. Residues Thr500–Gly566 form the FHA domain. Positions Glu577–Tyr674 form a coiled coil. Residues Asp949 to Glu973 form a disordered region. One can recognise a PH domain in the interval Val1538–Ala1636.

Belongs to the TRAFAC class myosin-kinesin ATPase superfamily. Kinesin family. Unc-104 subfamily. As to quaternary structure, monomer.

The protein localises to the cytoplasm. The protein resides in the cytoskeleton. Its function is as follows. Required for presynaptic maturation, has a role in axonal transport of dense-core vesicles carrying synaptic vesicle precursors, components required for the morphological transformation of axonal growth cones to mature boutons. The polypeptide is Kinesin-like protein unc-104 (Drosophila pseudoobscura pseudoobscura (Fruit fly)).